The following is a 503-amino-acid chain: Lysine--tRNA ligase (503 aa).

Residues glutamate 410 and glutamate 417 each contribute to the Mg(2+) site.

It belongs to the class-II aminoacyl-tRNA synthetase family. As to quaternary structure, homodimer. The cofactor is Mg(2+).

The protein resides in the cytoplasm. It catalyses the reaction tRNA(Lys) + L-lysine + ATP = L-lysyl-tRNA(Lys) + AMP + diphosphate. In Prochlorococcus marinus (strain MIT 9211), this protein is Lysine--tRNA ligase.